We begin with the raw amino-acid sequence, 454 residues long: Ornithine aminotransferase (454 aa).

Lys280 is modified (N6-(pyridoxal phosphate)lysine).

Belongs to the class-III pyridoxal-phosphate-dependent aminotransferase family. Requires pyridoxal 5'-phosphate as cofactor.

Its subcellular location is the cytoplasm. It carries out the reaction a 2-oxocarboxylate + L-ornithine = L-glutamate 5-semialdehyde + an L-alpha-amino acid. Its pathway is amino-acid biosynthesis; L-proline biosynthesis; L-glutamate 5-semialdehyde from L-ornithine: step 1/1. This Emericella nidulans (strain FGSC A4 / ATCC 38163 / CBS 112.46 / NRRL 194 / M139) (Aspergillus nidulans) protein is Ornithine aminotransferase (otaA).